The primary structure comprises 328 residues: 6-phosphogluconolactonase (328 aa).

It belongs to the cycloisomerase 2 family.

It carries out the reaction 6-phospho-D-glucono-1,5-lactone + H2O = 6-phospho-D-gluconate + H(+). The protein operates within carbohydrate degradation; pentose phosphate pathway; D-ribulose 5-phosphate from D-glucose 6-phosphate (oxidative stage): step 2/3. Its function is as follows. Catalyzes the hydrolysis of 6-phosphogluconolactone to 6-phosphogluconate. This is 6-phosphogluconolactonase from Photorhabdus laumondii subsp. laumondii (strain DSM 15139 / CIP 105565 / TT01) (Photorhabdus luminescens subsp. laumondii).